A 136-amino-acid polypeptide reads, in one-letter code: Large ribosomal subunit protein uL16 (136 aa).

The protein belongs to the universal ribosomal protein uL16 family. In terms of assembly, part of the 50S ribosomal subunit.

In terms of biological role, binds 23S rRNA and is also seen to make contacts with the A and possibly P site tRNAs. In Enterobacter sp. (strain 638), this protein is Large ribosomal subunit protein uL16.